A 342-amino-acid chain; its full sequence is Ferredoxin--NADP reductase (342 aa).

FAD contacts are provided by cysteine 17, aspartate 36, glutamine 44, tyrosine 49, isoleucine 89, phenylalanine 124, aspartate 289, and threonine 330.

Belongs to the ferredoxin--NADP reductase type 2 family. As to quaternary structure, homodimer. It depends on FAD as a cofactor.

The catalysed reaction is 2 reduced [2Fe-2S]-[ferredoxin] + NADP(+) + H(+) = 2 oxidized [2Fe-2S]-[ferredoxin] + NADPH. In Rhodopseudomonas palustris (strain BisA53), this protein is Ferredoxin--NADP reductase.